A 353-amino-acid polypeptide reads, in one-letter code: Protein-arginine kinase (353 aa).

Residues Ile24–Ala256 enclose the Phosphagen kinase C-terminal domain. Residues Ser27–Arg31, His93, Arg127, Arg178–Met182, and Arg209–Glu214 contribute to the ATP site. The RDXXRA motif of the pArg binding pocket involved in allosteric regulation motif lies at Arg339–Ala344.

It belongs to the ATP:guanido phosphotransferase family.

It carries out the reaction L-arginyl-[protein] + ATP = N(omega)-phospho-L-arginyl-[protein] + ADP + H(+). Appears to be allosterically activated by the binding of pArg-containing polypeptides to the pArg-binding pocket localized in the C-terminal domain of McsB. Catalyzes the specific phosphorylation of arginine residues in proteins. This chain is Protein-arginine kinase, found in Symbiobacterium thermophilum (strain DSM 24528 / JCM 14929 / IAM 14863 / T).